A 207-amino-acid polypeptide reads, in one-letter code: Thiamine-phosphate synthase (207 aa).

Residues 36-40 and Asp-68 each bind 4-amino-2-methyl-5-(diphosphooxymethyl)pyrimidine; that span reads QMRIK. Asp-69 and Asp-88 together coordinate Mg(2+). Ser-106 contributes to the 4-amino-2-methyl-5-(diphosphooxymethyl)pyrimidine binding site. 132-134 lines the 2-[(2R,5Z)-2-carboxy-4-methylthiazol-5(2H)-ylidene]ethyl phosphate pocket; it reads TKT. Residue Lys-135 participates in 4-amino-2-methyl-5-(diphosphooxymethyl)pyrimidine binding. Residues Gly-162 and 182-183 each bind 2-[(2R,5Z)-2-carboxy-4-methylthiazol-5(2H)-ylidene]ethyl phosphate; that span reads IS.

This sequence belongs to the thiamine-phosphate synthase family. Mg(2+) serves as cofactor.

The enzyme catalyses 2-[(2R,5Z)-2-carboxy-4-methylthiazol-5(2H)-ylidene]ethyl phosphate + 4-amino-2-methyl-5-(diphosphooxymethyl)pyrimidine + 2 H(+) = thiamine phosphate + CO2 + diphosphate. It catalyses the reaction 2-(2-carboxy-4-methylthiazol-5-yl)ethyl phosphate + 4-amino-2-methyl-5-(diphosphooxymethyl)pyrimidine + 2 H(+) = thiamine phosphate + CO2 + diphosphate. It carries out the reaction 4-methyl-5-(2-phosphooxyethyl)-thiazole + 4-amino-2-methyl-5-(diphosphooxymethyl)pyrimidine + H(+) = thiamine phosphate + diphosphate. Its pathway is cofactor biosynthesis; thiamine diphosphate biosynthesis; thiamine phosphate from 4-amino-2-methyl-5-diphosphomethylpyrimidine and 4-methyl-5-(2-phosphoethyl)-thiazole: step 1/1. Its function is as follows. Condenses 4-methyl-5-(beta-hydroxyethyl)thiazole monophosphate (THZ-P) and 2-methyl-4-amino-5-hydroxymethyl pyrimidine pyrophosphate (HMP-PP) to form thiamine monophosphate (TMP). The chain is Thiamine-phosphate synthase from Pyrococcus furiosus (strain ATCC 43587 / DSM 3638 / JCM 8422 / Vc1).